We begin with the raw amino-acid sequence, 223 residues long: uncharacterized protein (223 aa).

The 192-residue stretch at 29–220 folds into the Tyr recombinase domain; the sequence is KQTYKMFKED…AKEILKNIGD (192 aa). Residues R71, K103, H170, R173, and H196 contribute to the active site. The active-site O-(3'-phospho-DNA)-tyrosine intermediate is Y205.

It belongs to the 'phage' integrase family.

This is an uncharacterized protein from Methanocaldococcus jannaschii (strain ATCC 43067 / DSM 2661 / JAL-1 / JCM 10045 / NBRC 100440) (Methanococcus jannaschii).